The sequence spans 198 residues: Large ribosomal subunit protein eL19 (198 aa).

Disordered stretches follow at residues 66–85 (YEEA…RGTA) and 150–177 (KRAK…EERQ). Residues 71 to 83 (RKGRHTGYGKRRG) show a composition bias toward basic residues. The segment covering 160 to 177 (QARRDKNKESRKRREERQ) has biased composition (basic and acidic residues).

The protein belongs to the eukaryotic ribosomal protein eL19 family.

This is Large ribosomal subunit protein eL19 (rpl-19) from Caenorhabditis elegans.